The chain runs to 178 residues: Neuroblastoma suppressor of tumorigenicity 1 (178 aa).

The N-terminal stretch at 1 to 16 is a signal peptide; that stretch reads MLWVLVGTVLPVMLLA. 5 disulfides stabilise this stretch: Cys34/Cys84, Cys48/Cys98, Cys58/Cys117, Cys62/Cys119, and Cys81/Cys122. A CTCK domain is found at 34 to 123; the sequence is CEAKNITQIV…IVHCSCQACG (90 aa). Positions 130-178 are disordered; it reads GLNVYMQGEDGPGSQPGSHSHSHPHPGCQTPEPEEPPGAPQVEEEGAED.

Belongs to the DAN family. Homodimer. As to expression, most abundant in lung, brain, intestine and kidney.

Its subcellular location is the secreted. In terms of biological role, possible candidate as a tumor suppressor gene of neuroblastoma. May play an important role in preventing cells from entering the final stage (G1/S) of the transformation process. The protein is Neuroblastoma suppressor of tumorigenicity 1 (Nbl1) of Rattus norvegicus (Rat).